The primary structure comprises 159 residues: ATP synthase subunit b (159 aa).

A helical transmembrane segment spans residues 2-22 (NISIPQIIAAILNFIILLLIV).

Belongs to the ATPase B chain family. In terms of assembly, F-type ATPases have 2 components, F(1) - the catalytic core - and F(0) - the membrane proton channel. F(1) has five subunits: alpha(3), beta(3), gamma(1), delta(1), epsilon(1). F(0) has three main subunits: a(1), b(2) and c(10-14). The alpha and beta chains form an alternating ring which encloses part of the gamma chain. F(1) is attached to F(0) by a central stalk formed by the gamma and epsilon chains, while a peripheral stalk is formed by the delta and b chains.

It localises to the cell membrane. F(1)F(0) ATP synthase produces ATP from ADP in the presence of a proton or sodium gradient. F-type ATPases consist of two structural domains, F(1) containing the extramembraneous catalytic core and F(0) containing the membrane proton channel, linked together by a central stalk and a peripheral stalk. During catalysis, ATP synthesis in the catalytic domain of F(1) is coupled via a rotary mechanism of the central stalk subunits to proton translocation. Its function is as follows. Component of the F(0) channel, it forms part of the peripheral stalk, linking F(1) to F(0). The chain is ATP synthase subunit b from Clostridium botulinum (strain Okra / Type B1).